Here is a 144-residue protein sequence, read N- to C-terminus: Pleckstrin homology-like domain family A member 2 (144 aa).

In terms of domain architecture, PH spans 18 to 111 (ILCEGELEKR…AAITMALIDF (94 aa)). Phosphoserine is present on Ser-140.

Belongs to the PHLDA2 family. As to expression, specifically expressed at high levels in extraembryonic tissues in the developing conceptus (at protein level). Expressed in placenta and yolc sac. Expressed at low levels in fetal liver and kidney.

Its subcellular location is the cytoplasm. It is found in the membrane. Functionally, plays a role in regulating placenta growth. May act via its PH domain that competes with other PH domain-containing proteins, thereby preventing their binding to membrane lipids. This is Pleckstrin homology-like domain family A member 2 (Phlda2) from Mus musculus (Mouse).